We begin with the raw amino-acid sequence, 93 residues long: MLTVNSYFDESVKSIGFEQNKNAISVGVMLPGSYTFGTNAAEKMTVVTGSLTIKRSSDADWVTFSSGEFFSVEGSSSFDVNVEIETAYLCEYL.

The protein belongs to the nucleoside phosphorylase PpnP family.

The enzyme catalyses a purine D-ribonucleoside + phosphate = a purine nucleobase + alpha-D-ribose 1-phosphate. It catalyses the reaction adenosine + phosphate = alpha-D-ribose 1-phosphate + adenine. It carries out the reaction cytidine + phosphate = cytosine + alpha-D-ribose 1-phosphate. The catalysed reaction is guanosine + phosphate = alpha-D-ribose 1-phosphate + guanine. The enzyme catalyses inosine + phosphate = alpha-D-ribose 1-phosphate + hypoxanthine. It catalyses the reaction thymidine + phosphate = 2-deoxy-alpha-D-ribose 1-phosphate + thymine. It carries out the reaction uridine + phosphate = alpha-D-ribose 1-phosphate + uracil. The catalysed reaction is xanthosine + phosphate = alpha-D-ribose 1-phosphate + xanthine. In terms of biological role, catalyzes the phosphorolysis of diverse nucleosides, yielding D-ribose 1-phosphate and the respective free bases. Can use uridine, adenosine, guanosine, cytidine, thymidine, inosine and xanthosine as substrates. Also catalyzes the reverse reactions. This is Pyrimidine/purine nucleoside phosphorylase from Aliivibrio salmonicida (strain LFI1238) (Vibrio salmonicida (strain LFI1238)).